Consider the following 138-residue polypeptide: Mediator of RNA polymerase II transcription subunit 19 (138 aa).

It belongs to the Mediator complex subunit 19 family. In terms of assembly, component of the Mediator complex.

It localises to the nucleus. Functionally, component of the Mediator complex, a coactivator involved in the regulated transcription of nearly all RNA polymerase II-dependent genes. Mediator functions as a bridge to convey information from gene-specific regulatory proteins to the basal RNA polymerase II transcription machinery. Mediator is recruited to promoters by direct interactions with regulatory proteins and serves as a scaffold for the assembly of a functional preinitiation complex with RNA polymerase II and the general transcription factors. The chain is Mediator of RNA polymerase II transcription subunit 19 (med19) from Schizosaccharomyces pombe (strain 972 / ATCC 24843) (Fission yeast).